We begin with the raw amino-acid sequence, 98 residues long: NADH-ubiquinone oxidoreductase chain 4L (98 aa).

Transmembrane regions (helical) follow at residues 1–21 (MTSI…GVLV), 28–48 (STLL…ALLI), and 59–79 (APLI…ALLV).

The protein belongs to the complex I subunit 4L family. Core subunit of respiratory chain NADH dehydrogenase (Complex I) which is composed of 45 different subunits.

It is found in the mitochondrion inner membrane. It carries out the reaction a ubiquinone + NADH + 5 H(+)(in) = a ubiquinol + NAD(+) + 4 H(+)(out). Core subunit of the mitochondrial membrane respiratory chain NADH dehydrogenase (Complex I) which catalyzes electron transfer from NADH through the respiratory chain, using ubiquinone as an electron acceptor. Part of the enzyme membrane arm which is embedded in the lipid bilayer and involved in proton translocation. This chain is NADH-ubiquinone oxidoreductase chain 4L (MT-ND4L), found in Dactylopsila trivirgata (Striped possum).